Consider the following 423-residue polypeptide: MSTKQVTCRYFLHGVCREGSRCLFSHDLNNSKPSTICKFYQRGVCAYGERCRYDHIKPSSRGGGGGAPEDQAGGGGAGGGGAGIGGAGGGPSVRGGMKKNLVLRDRVLGVDRVDRMFGAPADSMWSDVSTAAAPHSYVEAIRTGLDASAQDQATPPVCGPSQNLPQLCPYAANGHCFYEENCTYLHGDLCEVCGLQVLHPHDSEQRRAHEKMCLAAFEADMEKAFAAQLSQDKVCSICMEVVVQKANPSDRRFGILSSCCHTFCLACIRKWRCTRTFSNTIIKSCPECRVVSEFVIPSVYWVEDQEDKDHLIDLFKSGVSKKACKYFDQGRGSCPFGGKCLYLHAFPDGTRAEPDRPRKQLSSEGNVRFMNSVRLWDFIEEREQRSVPPLPALDDDMAELRELFMQMSGPSHDGPETPPTADQ.

C3H1-type zinc fingers lie at residues 2-29 (STKQ…HDLN) and 31-58 (SKPS…HIKP). The interval 59 to 90 (SSRGGGGGAPEDQAGGGGAGGGGAGIGGAGGG) is disordered. The segment covering 61–90 (RGGGGGAPEDQAGGGGAGGGGAGIGGAGGG) has biased composition (gly residues). The C3H1-type 3 zinc finger occupies 162–189 (QNLPQLCPYAANGHCFYEENCTYLHGDL). Residues 190–219 (CEVCGLQVLHPHDSEQRRAHEKMCLAAFEA) form a makorin-type Cys-His region. The RING-type zinc-finger motif lies at 235–289 (CSICMEVVVQKANPSDRRFGILSSCCHTFCLACIRKWRCTRTFSNTIIKSCPECR). The C3H1-type 4 zinc finger occupies 318–347 (GVSKKACKYFDQGRGSCPFGGKCLYLHAFP).

Its subcellular location is the cytoplasm. It is found in the nucleus. The catalysed reaction is S-ubiquitinyl-[E2 ubiquitin-conjugating enzyme]-L-cysteine + [acceptor protein]-L-lysine = [E2 ubiquitin-conjugating enzyme]-L-cysteine + N(6)-ubiquitinyl-[acceptor protein]-L-lysine.. It functions in the pathway protein modification; protein ubiquitination. E3 ubiquitin ligase catalyzing the covalent attachment of ubiquitin moieties onto substrate proteins. Inhibits neurogenesis and axis formation during embryonic development by modulating the phosphatidylinositol 3-kinase (PI3K) pathway. Acts downstream of PI3K and akt1 to up-regulate gsk3b mRNA expression. The sequence is that of E3 ubiquitin-protein ligase makorin-2 (mkrn2) from Seriola quinqueradiata (Five-ray yellowtail).